The chain runs to 278 residues: Pantothenate synthetase (278 aa).

27-34 provides a ligand contact to ATP; that stretch reads MGYLHEGH. Residue H34 is the Proton donor of the active site. Residue Q58 participates in (R)-pantoate binding. Beta-alanine is bound at residue Q58. 144–147 serves as a coordination point for ATP; sequence GQKD. Q150 contributes to the (R)-pantoate binding site. Residues V173 and 181–184 each bind ATP; that span reads MSSR.

It belongs to the pantothenate synthetase family. Homodimer.

The protein resides in the cytoplasm. The catalysed reaction is (R)-pantoate + beta-alanine + ATP = (R)-pantothenate + AMP + diphosphate + H(+). Its pathway is cofactor biosynthesis; (R)-pantothenate biosynthesis; (R)-pantothenate from (R)-pantoate and beta-alanine: step 1/1. Its function is as follows. Catalyzes the condensation of pantoate with beta-alanine in an ATP-dependent reaction via a pantoyl-adenylate intermediate. The protein is Pantothenate synthetase of Roseiflexus sp. (strain RS-1).